The sequence spans 726 residues: Catalase-peroxidase 1 (726 aa).

The segment at 1-33 (MSTSDDIHNTTATGKCPFHQGGHDQSAGAGTTT) is disordered. A cross-link (tryptophyl-tyrosyl-methioninium (Trp-Tyr) (with M-252)) is located at residues 105–226 (WHGAGTYRSI…LGATEMGLIY (122 aa)). Histidine 106 serves as the catalytic Proton acceptor. A cross-link (tryptophyl-tyrosyl-methioninium (Tyr-Met) (with W-105)) is located at residues 226-252 (YVNPEGPDHSGEPLSAAAAIRATFGNM). Histidine 267 serves as a coordination point for heme b.

This sequence belongs to the peroxidase family. Peroxidase/catalase subfamily. In terms of assembly, homodimer or homotetramer. The cofactor is heme b. Formation of the three residue Trp-Tyr-Met cross-link is important for the catalase, but not the peroxidase activity of the enzyme.

It carries out the reaction H2O2 + AH2 = A + 2 H2O. The catalysed reaction is 2 H2O2 = O2 + 2 H2O. Bifunctional enzyme with both catalase and broad-spectrum peroxidase activity. The protein is Catalase-peroxidase 1 of Escherichia coli O157:H7.